Reading from the N-terminus, the 177-residue chain is Large ribosomal subunit protein uL6 (177 aa).

The protein belongs to the universal ribosomal protein uL6 family. Part of the 50S ribosomal subunit.

Its function is as follows. This protein binds to the 23S rRNA, and is important in its secondary structure. It is located near the subunit interface in the base of the L7/L12 stalk, and near the tRNA binding site of the peptidyltransferase center. In Nitrobacter winogradskyi (strain ATCC 25391 / DSM 10237 / CIP 104748 / NCIMB 11846 / Nb-255), this protein is Large ribosomal subunit protein uL6.